We begin with the raw amino-acid sequence, 275 residues long: MTLQQQIIKALGAKPQINAEEEIRRSIDFLKSYLQTYPFIKSLVLGISGGQDSTLAGKLCQMAINELRLETGNESLQFIAVRLPYGVQADEQDCQDAIAFIQPDRVLTVNIKGAVLASEQALREAGIELSDFVRGNEKARERMKAQYSIAGMTSGVVVGTDHAAEAITGFFTKYGDGGTDINPLYRLNKRQGKQLLAALGCPEHLYKKAPTADLEDDRPSLPDEVALGVTYDNIDDYLEGKNVPEQVARTIENWYLKTEHKRRPPITVFDDFWKK.

46-53 (GISGGQDS) contributes to the ATP binding site. Residue aspartate 52 participates in Mg(2+) binding. Deamido-NAD(+) is bound at residue arginine 140. An ATP-binding site is contributed by threonine 160. Glutamate 165 is a binding site for Mg(2+). Deamido-NAD(+) is bound by residues lysine 173 and aspartate 180. Residues lysine 189 and threonine 211 each contribute to the ATP site. Deamido-NAD(+) is bound at residue 260 to 261 (HK).

This sequence belongs to the NAD synthetase family. In terms of assembly, homodimer.

The catalysed reaction is deamido-NAD(+) + NH4(+) + ATP = AMP + diphosphate + NAD(+) + H(+). It functions in the pathway cofactor biosynthesis; NAD(+) biosynthesis; NAD(+) from deamido-NAD(+) (ammonia route): step 1/1. Its function is as follows. Catalyzes the ATP-dependent amidation of deamido-NAD to form NAD. Uses ammonia as a nitrogen source. In Escherichia coli O139:H28 (strain E24377A / ETEC), this protein is NH(3)-dependent NAD(+) synthetase.